We begin with the raw amino-acid sequence, 516 residues long: NADH-quinone oxidoreductase subunit N (516 aa).

14 consecutive transmembrane segments (helical) span residues 12 to 32 (LLPAYLAAGTAVLVLLADLLV), 37 to 57 (VTISVAALGALATAAGAVLVG), 81 to 101 (LVAVLVALLTLGVLGLSGPLL), 108 to 128 (VGEYCFLLAASMTGGVALGAA), 131 to 151 (LITLIVALETLTLPLYVLVGL), 163 to 183 (VTFFVVSVVATTLTLLGAALL), 213 to 233 (VAVALVVVGLTVKVAAVPFHA), 246 to 266 (VAAYLSTVSKLGGVVALLAVV), 274 to 294 (ITGLVLALLAVLTMTVGNLVA), 303 to 323 (LLAWSSVAQAGYILAPLGALA), 341 to 361 (VAYTVFFVVLELAAFAAVVAL), 386 to 406 (VGLALALVGLAGLPPGLAGLF), 419 to 439 (GAAGLALVVAVNAVLGLAYYL), and 491 to 511 (VVLAAATVVALVVGFAPQLVL).

The protein belongs to the complex I subunit 2 family. NDH-1 is composed of 14 different subunits. Subunits NuoA, H, J, K, L, M, N constitute the membrane sector of the complex.

The protein resides in the cell membrane. It catalyses the reaction a quinone + NADH + 5 H(+)(in) = a quinol + NAD(+) + 4 H(+)(out). Its function is as follows. NDH-1 shuttles electrons from NADH, via FMN and iron-sulfur (Fe-S) centers, to quinones in the respiratory chain. The immediate electron acceptor for the enzyme in this species is believed to be a menaquinone. Couples the redox reaction to proton translocation (for every two electrons transferred, four hydrogen ions are translocated across the cytoplasmic membrane), and thus conserves the redox energy in a proton gradient. The sequence is that of NADH-quinone oxidoreductase subunit N from Salinispora tropica (strain ATCC BAA-916 / DSM 44818 / JCM 13857 / NBRC 105044 / CNB-440).